Here is a 130-residue protein sequence, read N- to C-terminus: Protein ApaG (130 aa).

Residues Arg3–Arg127 enclose the ApaG domain. The disordered stretch occupies residues Glu63–Glu83.

This is Protein ApaG from Rhizobium etli (strain ATCC 51251 / DSM 11541 / JCM 21823 / NBRC 15573 / CFN 42).